The chain runs to 415 residues: Glucose-1-phosphate adenylyltransferase (415 aa).

Residues tyrosine 100, glycine 165, 182 to 183 (EK), and serine 200 contribute to the alpha-D-glucose 1-phosphate site.

Belongs to the bacterial/plant glucose-1-phosphate adenylyltransferase family. Homotetramer.

The catalysed reaction is alpha-D-glucose 1-phosphate + ATP + H(+) = ADP-alpha-D-glucose + diphosphate. Its pathway is glycan biosynthesis; glycogen biosynthesis. In terms of biological role, involved in the biosynthesis of ADP-glucose, a building block required for the elongation reactions to produce glycogen. Catalyzes the reaction between ATP and alpha-D-glucose 1-phosphate (G1P) to produce pyrophosphate and ADP-Glc. The chain is Glucose-1-phosphate adenylyltransferase from Bifidobacterium animalis subsp. lactis (strain AD011).